A 210-amino-acid polypeptide reads, in one-letter code: HTH-type transcriptional repressor FabR (210 aa).

One can recognise an HTH tetR-type domain in the interval 10–70; that stretch reads KTRRSLVEAA…TMVDESGLML (61 aa). A DNA-binding region (H-T-H motif) is located at residues 33–52; the sequence is SLREVAREAGIAPTSFYRHF.

Homodimer.

The protein localises to the cytoplasm. Its function is as follows. Represses the transcription of fabB, involved in unsaturated fatty acid (UFA) biosynthesis. By controlling UFA production, FabR directly influences the physical properties of the membrane bilayer. The sequence is that of HTH-type transcriptional repressor FabR from Citrobacter koseri (strain ATCC BAA-895 / CDC 4225-83 / SGSC4696).